A 434-amino-acid polypeptide reads, in one-letter code: Histidinol dehydrogenase (434 aa).

Tyrosine 130, glutamine 188, and asparagine 211 together coordinate NAD(+). Substrate contacts are provided by serine 237, glutamine 259, and histidine 262. Zn(2+) contacts are provided by glutamine 259 and histidine 262. Active-site proton acceptor residues include glutamate 326 and histidine 327. The substrate site is built by histidine 327, aspartate 360, glutamate 414, and histidine 419. Aspartate 360 provides a ligand contact to Zn(2+). Histidine 419 lines the Zn(2+) pocket.

The protein belongs to the histidinol dehydrogenase family. Homodimer. Zn(2+) is required as a cofactor.

The catalysed reaction is L-histidinol + 2 NAD(+) + H2O = L-histidine + 2 NADH + 3 H(+). It functions in the pathway amino-acid biosynthesis; L-histidine biosynthesis; L-histidine from 5-phospho-alpha-D-ribose 1-diphosphate: step 9/9. Its function is as follows. Catalyzes the sequential NAD-dependent oxidations of L-histidinol to L-histidinaldehyde and then to L-histidine. This is Histidinol dehydrogenase from Shigella sonnei (strain Ss046).